A 156-amino-acid polypeptide reads, in one-letter code: SsrA-binding protein (156 aa).

Belongs to the SmpB family.

It is found in the cytoplasm. Required for rescue of stalled ribosomes mediated by trans-translation. Binds to transfer-messenger RNA (tmRNA), required for stable association of tmRNA with ribosomes. tmRNA and SmpB together mimic tRNA shape, replacing the anticodon stem-loop with SmpB. tmRNA is encoded by the ssrA gene; the 2 termini fold to resemble tRNA(Ala) and it encodes a 'tag peptide', a short internal open reading frame. During trans-translation Ala-aminoacylated tmRNA acts like a tRNA, entering the A-site of stalled ribosomes, displacing the stalled mRNA. The ribosome then switches to translate the ORF on the tmRNA; the nascent peptide is terminated with the 'tag peptide' encoded by the tmRNA and targeted for degradation. The ribosome is freed to recommence translation, which seems to be the essential function of trans-translation. The chain is SsrA-binding protein from Paracoccus denitrificans (strain Pd 1222).